A 454-amino-acid chain; its full sequence is Cytochrome b-c1 complex subunit 2, mitochondrial (454 aa).

The transit peptide at 1 to 35 (MISRSALSRGSQLALRRPAAAKTAQRGFAAAAASP) directs the protein to the mitochondrion.

This sequence belongs to the peptidase M16 family. UQCRC2/QCR2 subfamily. In terms of assembly, component of the ubiquinol-cytochrome c oxidoreductase (cytochrome b-c1 complex, complex III, CIII), a multisubunit enzyme composed of 10 subunits. The complex is composed of 3 respiratory subunits cytochrome b (cob), cytochrome c1 (cyt-1) and Rieske protein (fes-1), 2 core protein subunits pep and ucr-1, and 5 low-molecular weight protein subunits qcr6, qcr7, qcr8, qcr9 and probably NCU16844/qcr10. The complex exists as an obligatory dimer and forms supercomplexes (SCs) in the inner mitochondrial membrane with NADH-ubiquinone oxidoreductase (complex I, CI) and cytochrome c oxidase (complex IV, CIV), resulting in different assemblies (supercomplexes SCI(1)III(2), SCIII(2)IV(1) and SCIII(2)IV(2) as well as higher order I(x)III(y)IV(z) megacomplexes).

It localises to the mitochondrion inner membrane. Functionally, component of the ubiquinol-cytochrome c oxidoreductase, a multisubunit transmembrane complex that is part of the mitochondrial electron transport chain which drives oxidative phosphorylation. The respiratory chain contains 3 multisubunit complexes succinate dehydrogenase (complex II, CII), ubiquinol-cytochrome c oxidoreductase (cytochrome b-c1 complex, complex III, CIII) and cytochrome c oxidase (complex IV, CIV), that cooperate to transfer electrons derived from NADH and succinate to molecular oxygen, creating an electrochemical gradient over the inner membrane that drives transmembrane transport and the ATP synthase. The cytochrome b-c1 complex catalyzes electron transfer from ubiquinol to cytochrome c, linking this redox reaction to translocation of protons across the mitochondrial inner membrane, with protons being carried across the membrane as hydrogens on the quinol. In the process called Q cycle, 2 protons are consumed from the matrix, 4 protons are released into the intermembrane space and 2 electrons are passed to cytochrome c. The polypeptide is Cytochrome b-c1 complex subunit 2, mitochondrial (ucr-1) (Neurospora crassa (strain ATCC 24698 / 74-OR23-1A / CBS 708.71 / DSM 1257 / FGSC 987)).